We begin with the raw amino-acid sequence, 551 residues long: E3 ubiquitin-protein ligase TRIM8 (551 aa).

Residues 15–56 (CPICLHVFVEPVQLPCKHNFCRGCIGEAWAKDSGLVRCPECN) form an RING-type zinc finger. 2 B box-type zinc fingers span residues 92-132 (CVFC…ARGH) and 140-182 (VRAW…VCDV). Residues 181-249 (DVEIRRNEIR…HQLLDEDLRQ (69 aa)) are a coiled coil.

This sequence belongs to the TRIM/RBCC family. As to quaternary structure, homodimer. Interacts with SOCS1 (via) SH2 domain and SOCS box. Interacts with HSP90AB1; prevents nucleus translocation of phosphorylated STAT3 and HSP90AB1. Interacts with MAP3K7/TAK1. Interacts with PIAS3. Interacts with TICAM1. Interacts with TRIM15; this interaction prevents TRIM8 cytoplasmic translocation. As to expression, widely expressed. Expressed in glomerular podocytes of kidneys.

The protein resides in the cytoplasm. It is found in the nucleus. It localises to the nuclear body. It catalyses the reaction S-ubiquitinyl-[E2 ubiquitin-conjugating enzyme]-L-cysteine + [acceptor protein]-L-lysine = [E2 ubiquitin-conjugating enzyme]-L-cysteine + N(6)-ubiquitinyl-[acceptor protein]-L-lysine.. It functions in the pathway protein modification; protein ubiquitination. Its function is as follows. E3 ubiquitin-protein ligase that participates in multiple biological processes including cell survival, differentiation, apoptosis, and in particular, the innate immune response. Participates in the activation of interferon-gamma signaling by promoting proteasomal degradation of the repressor SOCS1. Plays a positive role in the TNFalpha and IL-1beta signaling pathways. Mechanistically, induces the 'Lys-63'-linked polyubiquitination of MAP3K7/TAK1 component leading to the activation of NF-kappa-B. Also modulates STAT3 activity through negative regulation of PIAS3, either by degradation of PIAS3 through the ubiquitin-proteasome pathway or exclusion of PIAS3 from the nucleus. Negatively regulates TLR3/4-mediated innate immune response by catalyzing 'Lys-6'- and 'Lys-33'-linked polyubiquitination of TICAM1 and thereby disrupting the TICAM1-TBK1 interaction. The protein is E3 ubiquitin-protein ligase TRIM8 (TRIM8) of Homo sapiens (Human).